The sequence spans 323 residues: Ribose-phosphate pyrophosphokinase 2 (323 aa).

ATP is bound by residues 43 to 45 and 102 to 103; these read DGE and RQ. Residues His136 and Asp177 each coordinate Mg(2+). The active site involves Lys200. D-ribose 5-phosphate contacts are provided by residues Arg202, Asp226, and 230–234; that span reads DTAGT.

Belongs to the ribose-phosphate pyrophosphokinase family. Class I subfamily. In terms of assembly, homohexamer. It depends on Mg(2+) as a cofactor.

Its subcellular location is the cytoplasm. It carries out the reaction D-ribose 5-phosphate + ATP = 5-phospho-alpha-D-ribose 1-diphosphate + AMP + H(+). It participates in metabolic intermediate biosynthesis; 5-phospho-alpha-D-ribose 1-diphosphate biosynthesis; 5-phospho-alpha-D-ribose 1-diphosphate from D-ribose 5-phosphate (route I): step 1/1. Its function is as follows. Involved in the biosynthesis of the central metabolite phospho-alpha-D-ribosyl-1-pyrophosphate (PRPP) via the transfer of pyrophosphoryl group from ATP to 1-hydroxyl of ribose-5-phosphate (Rib-5-P). The sequence is that of Ribose-phosphate pyrophosphokinase 2 from Enterococcus faecalis (strain ATCC 700802 / V583).